A 433-amino-acid polypeptide reads, in one-letter code: MLPAGCSRRLVAELQGALDACAQRQLQLEQSLRVCRRLLHAWEPTGTRALKPPPGPETNGEDPLPACTPSPQDLKELEFLTQALEKAVRVRRGITKAGERDKAPSLKSRSIVTSSGTTASAPPHSPGQAGGHASDTRPTKGLRQTTVPAKGHPERRLLSVGDGTRVGMGARTPRPGAGLRDQQMAPSAAPQAPEAFTLKEKGHLLRLPAAFRKAASQNSSLWAQLSSTQTSDSTDAAAAKTQFLQNMQTASGGPQPRLSAVEVEAEAGRLRKACSLLRLRMREELSAAPMDWMQEYRCLLTLEGLQAMVGQCLHRLQELRAAVAEQPPRPCPVGRPPGASPSCGGRAEPAWSPQLLVYSSTQELQTLAALKLRVAVLDQQIHLEKVLMAELLPLVSAAQPQGPPWLALCRAVHSLLCEGGARVLTILRDEPAV.

Disordered stretches follow at residues 45–69 (TGTR…ACTP), 95–169 (TKAG…VGMG), and 326–345 (QPPR…SCGG). Residues 107–120 (KSRSIVTSSGTTAS) are compositionally biased toward polar residues. Serine 159 is modified (phosphoserine). Residues 327 to 339 (PPRPCPVGRPPGA) are compositionally biased toward pro residues.

Interacts with TEDC1. Found in a complex with TEDC1, TEDC2, TUBE1 and TUBD1.

It localises to the cell projection. Its subcellular location is the cilium. The protein localises to the cytoplasm. It is found in the cytoskeleton. The protein resides in the microtubule organizing center. It localises to the centrosome. Its subcellular location is the centriole. Functionally, acts as a positive regulator of ciliary hedgehog signaling. Required for centriole stability. This is Tubulin epsilon and delta complex protein 2 from Homo sapiens (Human).